Consider the following 391-residue polypeptide: ATP phosphoribosyltransferase regulatory subunit (391 aa).

The protein belongs to the class-II aminoacyl-tRNA synthetase family. HisZ subfamily. In terms of assembly, heteromultimer composed of HisG and HisZ subunits.

The protein localises to the cytoplasm. It participates in amino-acid biosynthesis; L-histidine biosynthesis; L-histidine from 5-phospho-alpha-D-ribose 1-diphosphate: step 1/9. Required for the first step of histidine biosynthesis. May allow the feedback regulation of ATP phosphoribosyltransferase activity by histidine. The protein is ATP phosphoribosyltransferase regulatory subunit of Clostridium kluyveri (strain ATCC 8527 / DSM 555 / NBRC 12016 / NCIMB 10680 / K1).